Here is a 505-residue protein sequence, read N- to C-terminus: DNA repair protein RadA (505 aa).

The segment at 10–27 (CSACGADHAQWFGRCPKC) adopts a C4-type zinc-finger fold. 107 to 114 (GDPGIGKS) serves as a coordination point for ATP. The RadA KNRFG motif signature appears at 281 to 285 (KNRFG). The lon-protease-like stretch occupies residues 380–505 (DAYLSVAGGL…KIEEDLGKKD (126 aa)). The tract at residues 485 to 505 (NTTDQGNGSEAKIEEDLGKKD) is disordered. Residues 495–505 (AKIEEDLGKKD) show a composition bias toward basic and acidic residues.

It belongs to the RecA family. RadA subfamily.

Its function is as follows. DNA-dependent ATPase involved in processing of recombination intermediates, plays a role in repairing DNA breaks. Stimulates the branch migration of RecA-mediated strand transfer reactions, allowing the 3' invading strand to extend heteroduplex DNA faster. Binds ssDNA in the presence of ADP but not other nucleotides, has ATPase activity that is stimulated by ssDNA and various branched DNA structures, but inhibited by SSB. Does not have RecA's homology-searching function. In Synechocystis sp. (strain ATCC 27184 / PCC 6803 / Kazusa), this protein is DNA repair protein RadA.